The chain runs to 427 residues: 3-phosphoshikimate 1-carboxyvinyltransferase (427 aa).

3-phosphoshikimate contacts are provided by K20, S21, and R25. K20 provides a ligand contact to phosphoenolpyruvate. G92 and R120 together coordinate phosphoenolpyruvate. 4 residues coordinate 3-phosphoshikimate: S166, Q168, D312, and K339. A phosphoenolpyruvate-binding site is contributed by Q168. D312 (proton acceptor) is an active-site residue. Positions 343 and 385 each coordinate phosphoenolpyruvate.

The protein belongs to the EPSP synthase family. Monomer.

It is found in the cytoplasm. It carries out the reaction 3-phosphoshikimate + phosphoenolpyruvate = 5-O-(1-carboxyvinyl)-3-phosphoshikimate + phosphate. Its pathway is metabolic intermediate biosynthesis; chorismate biosynthesis; chorismate from D-erythrose 4-phosphate and phosphoenolpyruvate: step 6/7. In terms of biological role, catalyzes the transfer of the enolpyruvyl moiety of phosphoenolpyruvate (PEP) to the 5-hydroxyl of shikimate-3-phosphate (S3P) to produce enolpyruvyl shikimate-3-phosphate and inorganic phosphate. The sequence is that of 3-phosphoshikimate 1-carboxyvinyltransferase from Streptococcus pyogenes serotype M49 (strain NZ131).